We begin with the raw amino-acid sequence, 126 residues long: Ribosome-binding factor A (126 aa).

The protein belongs to the RbfA family. As to quaternary structure, monomer. Binds 30S ribosomal subunits, but not 50S ribosomal subunits or 70S ribosomes.

The protein localises to the cytoplasm. Its function is as follows. One of several proteins that assist in the late maturation steps of the functional core of the 30S ribosomal subunit. Associates with free 30S ribosomal subunits (but not with 30S subunits that are part of 70S ribosomes or polysomes). Required for efficient processing of 16S rRNA. May interact with the 5'-terminal helix region of 16S rRNA. This Halorhodospira halophila (strain DSM 244 / SL1) (Ectothiorhodospira halophila (strain DSM 244 / SL1)) protein is Ribosome-binding factor A.